Here is a 581-residue protein sequence, read N- to C-terminus: MKEIAHSQAYGNRVFSRDSAVDSKKDVSISAEQPKTISKLTPYLFEGDIFLSTKQAMNILDSLASKNKTNKKGQQRMAHDAPLYLFRGANEKGKRFAAEYDAKWFQFPIKYRFDESLDILHISQILKALEIWQSNTCIKFENDQEASGDYIEFFEGDGCYSMVGRFGGRQGISIGKGCERTGTIIHEVGHTLGLWHEQSRPDAEEYITVVKEYIIPSYISEFLTRSEHEITTFNVPYDLGSVMHYGSTAFSIDQRSKTLLTKDPFYQMTIGQRDSLSFYNIKLINEAYCKGDCKEKNECKNGGYLNPSNCQSCLCPSGFGGSKCEMHASSESNSKCGGTLKAIIDWQYIESPGYPDGYPTNVICNWLIETDKEERIEISFEDNFGIFCSSTCVDYIELKIGNDLANTGYRICCYDKPNDSLVSAKYQAVIIFRATTGEDTGFKLKFRKTMKPAQTTPSLPKTTTTAPHTTIVGNDIWSEWGEWSQCSRSCGACGIKSRLRICKTAQCSGKVQQFLTCNLQACPVDIRCTKVKFKNRLCADGNTCGKPGELLSSCSRPSCCPPFENVDGKCQTDQPLLIPLE.

A propeptide spanning residues 1–95 (MKEIAHSQAY…FRGANEKGKR (95 aa)) is cleaved from the precursor. N-linked (GlcNAc...) asparagine glycosylation occurs at asparagine 67. The Peptidase M12A domain occupies 97 to 290 (AAEYDAKWFQ…IKLINEAYCK (194 aa)). 5 disulfide bridges follow: cysteine 137-cysteine 289, cysteine 159-cysteine 178, cysteine 293-cysteine 313, cysteine 315-cysteine 324, and cysteine 336-cysteine 364. Histidine 186 is a binding site for Zn(2+). The active site involves glutamate 187. Residues histidine 190 and histidine 196 each coordinate Zn(2+). One can recognise an EGF-like domain in the interval 285 to 325 (NEAYCKGDCKEKNECKNGGYLNPSNCQSCLCPSGFGGSKCE). One can recognise a CUB domain in the interval 336 to 449 (CGGTLKAIID…TGFKLKFRKT (114 aa)). A glycan (N-linked (GlcNAc...) asparagine) is linked at asparagine 418. The TSP type-1 domain occupies 474 to 523 (NDIWSEWGEWSQCSRSCGACGIKSRLRICKTAQCSGKVQQFLTCNLQACP). 3 disulfides stabilise this stretch: cysteine 486-cysteine 517, cysteine 490-cysteine 522, and cysteine 502-cysteine 507.

Requires Zn(2+) as cofactor.

The protein resides in the secreted. Its activity is regulated as follows. Inhibited by 1,10-phenanthroline. Functionally, metalloprotease. Involved in molting, a process during larval stages in which a new cuticle is formed and the old cuticle is shed. This chain is Zinc metalloproteinase nas-36, found in Brugia malayi (Filarial nematode worm).